Consider the following 172-residue polypeptide: Type VI secretion system sheath protein TssB1 (172 aa).

As to quaternary structure, forms a heterodimer with TssC1. Heterodimers assemble to form the sheath of the T6SS machinery. Interacts with TagJ. Interacts with TssA1.

In terms of biological role, core component of the H1 type VI (H1-T6SS) secretion system that plays a role in the release of toxins targeting both eukaryotic and prokaryotic species. Forms the sheath of the structure by assembling into tubules together with TssC1 resulting in the stacking of cogwheel-like structures showing predominantly a 12-fold symmetry. The sheath contracts to provide the energy needed for effector delivery. The polypeptide is Type VI secretion system sheath protein TssB1 (Pseudomonas aeruginosa (strain ATCC 15692 / DSM 22644 / CIP 104116 / JCM 14847 / LMG 12228 / 1C / PRS 101 / PAO1)).